The following is an 877-amino-acid chain: Alanine--tRNA ligase (877 aa).

Residues His-567, His-571, Cys-669, and His-673 each contribute to the Zn(2+) site.

It belongs to the class-II aminoacyl-tRNA synthetase family. Zn(2+) is required as a cofactor.

The protein resides in the cytoplasm. The enzyme catalyses tRNA(Ala) + L-alanine + ATP = L-alanyl-tRNA(Ala) + AMP + diphosphate. Its function is as follows. Catalyzes the attachment of alanine to tRNA(Ala) in a two-step reaction: alanine is first activated by ATP to form Ala-AMP and then transferred to the acceptor end of tRNA(Ala). Also edits incorrectly charged Ser-tRNA(Ala) and Gly-tRNA(Ala) via its editing domain. The chain is Alanine--tRNA ligase from Rickettsia bellii (strain RML369-C).